The following is a 371-amino-acid chain: Ribosomal RNA small subunit methyltransferase H (371 aa).

S-adenosyl-L-methionine is bound by residues 43 to 45, Asp-62, Leu-96, Asp-110, and Gln-117; that span reads GGH. A disordered region spans residues 315–371; the sequence is AAERLDPTQQQRQRTDRERYRRQVRAMHQPGTGSAVRRPVSGDDGTGTDEEGEGHDD. Positions 360 to 371 are enriched in acidic residues; it reads TGTDEEGEGHDD.

It belongs to the methyltransferase superfamily. RsmH family.

It is found in the cytoplasm. The catalysed reaction is cytidine(1402) in 16S rRNA + S-adenosyl-L-methionine = N(4)-methylcytidine(1402) in 16S rRNA + S-adenosyl-L-homocysteine + H(+). Specifically methylates the N4 position of cytidine in position 1402 (C1402) of 16S rRNA. The protein is Ribosomal RNA small subunit methyltransferase H of Salinispora tropica (strain ATCC BAA-916 / DSM 44818 / JCM 13857 / NBRC 105044 / CNB-440).